The sequence spans 425 residues: 3-phosphoshikimate 1-carboxyvinyltransferase (425 aa).

Residues Lys20, Ser21, and Arg25 each coordinate 3-phosphoshikimate. Lys20 contacts phosphoenolpyruvate. Phosphoenolpyruvate is bound by residues Gly92 and Arg120. 3-phosphoshikimate contacts are provided by Ser165, Gln167, Asp312, and Lys339. Gln167 contributes to the phosphoenolpyruvate binding site. Catalysis depends on Asp312, which acts as the Proton acceptor. Phosphoenolpyruvate-binding residues include Arg343 and Arg385.

This sequence belongs to the EPSP synthase family. Monomer.

It is found in the cytoplasm. It catalyses the reaction 3-phosphoshikimate + phosphoenolpyruvate = 5-O-(1-carboxyvinyl)-3-phosphoshikimate + phosphate. It functions in the pathway metabolic intermediate biosynthesis; chorismate biosynthesis; chorismate from D-erythrose 4-phosphate and phosphoenolpyruvate: step 6/7. Its function is as follows. Catalyzes the transfer of the enolpyruvyl moiety of phosphoenolpyruvate (PEP) to the 5-hydroxyl of shikimate-3-phosphate (S3P) to produce enolpyruvyl shikimate-3-phosphate and inorganic phosphate. The protein is 3-phosphoshikimate 1-carboxyvinyltransferase of Alkaliphilus metalliredigens (strain QYMF).